A 120-amino-acid chain; its full sequence is SPbeta prophage-derived uncharacterized protein YosG (120 aa).

This Bacillus subtilis (strain 168) protein is SPbeta prophage-derived uncharacterized protein YosG (yosG).